A 91-amino-acid polypeptide reads, in one-letter code: UPF0250 protein PputW619_0619 (91 aa).

This sequence belongs to the UPF0250 family.

The polypeptide is UPF0250 protein PputW619_0619 (Pseudomonas putida (strain W619)).